The primary structure comprises 84 residues: Putative membrane protein insertion efficiency factor (84 aa).

Residues 63-84 (LGGSGYDPPPPPKTPRKWKCEE) are disordered.

Belongs to the UPF0161 family.

It is found in the cell inner membrane. Its function is as follows. Could be involved in insertion of integral membrane proteins into the membrane. The polypeptide is Putative membrane protein insertion efficiency factor (Caulobacter sp. (strain K31)).